A 288-amino-acid chain; its full sequence is Diaminopimelate epimerase (288 aa).

Positions 14 and 67 each coordinate substrate. Residue C76 is the Proton donor of the active site. Substrate-binding positions include 77 to 78 (GN), N166, N199, and 217 to 218 (ER). Catalysis depends on C226, which acts as the Proton acceptor. Position 227–228 (227–228 (GT)) interacts with substrate.

It belongs to the diaminopimelate epimerase family. Homodimer.

It localises to the cytoplasm. It carries out the reaction (2S,6S)-2,6-diaminopimelate = meso-2,6-diaminopimelate. Its pathway is amino-acid biosynthesis; L-lysine biosynthesis via DAP pathway; DL-2,6-diaminopimelate from LL-2,6-diaminopimelate: step 1/1. Catalyzes the stereoinversion of LL-2,6-diaminopimelate (L,L-DAP) to meso-diaminopimelate (meso-DAP), a precursor of L-lysine and an essential component of the bacterial peptidoglycan. The sequence is that of Diaminopimelate epimerase from Bacillus cereus (strain 03BB102).